The chain runs to 239 residues: Ribosomal RNA large subunit methyltransferase E (239 aa).

The segment at methionine 1–lysine 20 is disordered. Positions threonine 11–lysine 20 are enriched in basic residues. The S-adenosyl-L-methionine site is built by glycine 81, tryptophan 83, aspartate 104, aspartate 120, and aspartate 144. Lysine 184 functions as the Proton acceptor in the catalytic mechanism.

Belongs to the class I-like SAM-binding methyltransferase superfamily. RNA methyltransferase RlmE family.

It localises to the cytoplasm. It carries out the reaction uridine(2552) in 23S rRNA + S-adenosyl-L-methionine = 2'-O-methyluridine(2552) in 23S rRNA + S-adenosyl-L-homocysteine + H(+). In terms of biological role, specifically methylates the uridine in position 2552 of 23S rRNA at the 2'-O position of the ribose in the fully assembled 50S ribosomal subunit. This Rhizobium etli (strain ATCC 51251 / DSM 11541 / JCM 21823 / NBRC 15573 / CFN 42) protein is Ribosomal RNA large subunit methyltransferase E.